We begin with the raw amino-acid sequence, 565 residues long: Dihydroxy-acid dehydratase (565 aa).

Cys-50 contacts [2Fe-2S] cluster. Asp-82 lines the Mg(2+) pocket. Cys-123 is a [2Fe-2S] cluster binding site. Residues Asp-124 and Lys-125 each contribute to the Mg(2+) site. Lys-125 carries the N6-carboxylysine modification. Cys-195 is a [2Fe-2S] cluster binding site. Residue Glu-447 coordinates Mg(2+). Ser-473 functions as the Proton acceptor in the catalytic mechanism.

This sequence belongs to the IlvD/Edd family. Homodimer. The cofactor is [2Fe-2S] cluster. It depends on Mg(2+) as a cofactor.

The enzyme catalyses (2R)-2,3-dihydroxy-3-methylbutanoate = 3-methyl-2-oxobutanoate + H2O. It carries out the reaction (2R,3R)-2,3-dihydroxy-3-methylpentanoate = (S)-3-methyl-2-oxopentanoate + H2O. It participates in amino-acid biosynthesis; L-isoleucine biosynthesis; L-isoleucine from 2-oxobutanoate: step 3/4. It functions in the pathway amino-acid biosynthesis; L-valine biosynthesis; L-valine from pyruvate: step 3/4. Its function is as follows. Functions in the biosynthesis of branched-chain amino acids. Catalyzes the dehydration of (2R,3R)-2,3-dihydroxy-3-methylpentanoate (2,3-dihydroxy-3-methylvalerate) into 2-oxo-3-methylpentanoate (2-oxo-3-methylvalerate) and of (2R)-2,3-dihydroxy-3-methylbutanoate (2,3-dihydroxyisovalerate) into 2-oxo-3-methylbutanoate (2-oxoisovalerate), the penultimate precursor to L-isoleucine and L-valine, respectively. The chain is Dihydroxy-acid dehydratase from Halorhodospira halophila (strain DSM 244 / SL1) (Ectothiorhodospira halophila (strain DSM 244 / SL1)).